An 83-amino-acid polypeptide reads, in one-letter code: Short neurotoxin 1 (83 aa).

An N-terminal signal peptide occupies residues 1–21; the sequence is MKTLLLTLVVVTIVCLDLGYT. Intrachain disulfides connect Cys24/Cys45, Cys38/Cys62, Cys64/Cys75, and Cys76/Cys81.

This sequence belongs to the three-finger toxin family. Short-chain subfamily. Type I alpha-neurotoxin sub-subfamily. As to expression, expressed by the venom gland.

Its subcellular location is the secreted. Functionally, binds to muscle nicotinic acetylcholine receptor (nAChR) and inhibit acetylcholine from binding to the receptor, thereby impairing neuromuscular transmission. This Pseudechis australis (Mulga snake) protein is Short neurotoxin 1.